A 384-amino-acid polypeptide reads, in one-letter code: Tryptophan--tRNA ligase (384 aa).

The short motif at 81–89 is the 'HIGH' region element; it reads PSGPMHIGH. A 'KMSKS' region motif is present at residues 252 to 256; that stretch reads KMSAS.

The protein belongs to the class-I aminoacyl-tRNA synthetase family.

It is found in the cytoplasm. It carries out the reaction tRNA(Trp) + L-tryptophan + ATP = L-tryptophyl-tRNA(Trp) + AMP + diphosphate + H(+). This is Tryptophan--tRNA ligase from Thermococcus kodakarensis (strain ATCC BAA-918 / JCM 12380 / KOD1) (Pyrococcus kodakaraensis (strain KOD1)).